Consider the following 453-residue polypeptide: Transcription factor radR (453 aa).

A compositionally biased stretch (polar residues) spans 1-30 (MPNNLQHQEGSYSLRSSNDVSPADDWTQTN). The interval 1–45 (MPNNLQHQEGSYSLRSSNDVSPADDWTQTNDPKEKKRIQNRVAQR) is disordered. The bZIP domain occupies 30-62 (NDPKEKKRIQNRVAQRTYRNRIRARLEELENKI). The segment at 33-50 (KEKKRIQNRVAQRTYRNR) is basic motif. Positions 51–58 (IRARLEEL) are leucine-zipper. The tract at residues 160–184 (APRAAQARSIAPTSTGMHQISPSYG) is disordered. Over residues 170 to 181 (APTSTGMHQISP) the composition is skewed to polar residues.

This sequence belongs to the bZIP family.

Its subcellular location is the nucleus. In terms of biological role, transcription factor that positively regulates the expression of the gene clusters that mediate the biosynthesis of pestheic acid, a diphenyl ether which is a biosynthetic precursor of the unique chloropupukeananes. This Floropilus chiversii (Chaetomium chiversii) protein is Transcription factor radR.